A 316-amino-acid chain; its full sequence is Rhomboid-related protein 4 (316 aa).

Over 1-21 (MQRRTRGIDTGLLLLLSQVFH) the chain is Cytoplasmic. The helical transmembrane segment at 22 to 42 (IGINNIPPVTLATLAVNVWFF) threads the bilayer. Residues 43–103 (LNPWKPLYHS…KLEKRLGSRW (61 aa)) lie on the Extracellular side of the membrane. Residues 104–124 (FAYIIATFSLLTGVVYLLLQF) traverse the membrane as a helical segment. Residues 125–137 (ASAELMNQPDFKR) are Cytoplasmic-facing. The helical transmembrane segment at 138-154 (NCAVGFSGVLFALKVLS) threads the bilayer. Residue S144 is the Nucleophile of the active site. Residues 155–182 (NHYCPGGFVNILGFPVPNRFACWAELAA) are Extracellular-facing. The chain crosses the membrane as a helical span at residues 183 to 203 (IHFCTPGTSFAGHLAGILVGL). Residue H195 is part of the active site. Topologically, residues 204–316 (MYTQGPLKKI…RQRLHRFDGQ (113 aa)) are cytoplasmic. Residues 269–284 (SEEEQLERALRASIWD) are ubiquitin-binding domain (UBD). A VCP/p97-interacting motif (VIM) region spans residues 301 to 316 (PEEEMRRQRLHRFDGQ).

Belongs to the peptidase S54 family. In terms of assembly, interacts with BIK and STEAP3. Interacts (via C-terminal domain) with VCP. Interacts with ubiquitin and ubiquitinated proteins. In terms of tissue distribution, expressed in intestine, lung, brain, kidney, epididymis and testis.

The protein localises to the endoplasmic reticulum membrane. It localises to the mitochondrion membrane. It carries out the reaction Cleaves type-1 transmembrane domains using a catalytic dyad composed of serine and histidine that are contributed by different transmembrane domains.. Inhibited by aprotinin. In terms of biological role, intramembrane-cleaving serine protease that cleaves single transmembrane or multi-pass membrane proteins in the hydrophobic plane of the membrane, luminal loops and juxtamembrane regions. Involved in regulated intramembrane proteolysis and the subsequent release of functional polypeptides from their membrane anchors. Functional component of endoplasmic reticulum-associated degradation (ERAD) for misfolded membrane proteins. Required for the degradation process of some specific misfolded endoplasmic reticulum (ER) luminal proteins. Participates in the transfer of misfolded proteins from the ER to the cytosol, where they are destroyed by the proteasome in a ubiquitin-dependent manner. Functions in BIK, MPZ, PKD1, PTCRA, RHO, STEAP3 and TRAC processing. Involved in the regulation of exosomal secretion; inhibits the TSAP6-mediated secretion pathway. Involved in the regulation of apoptosis; modulates BIK-mediated apoptotic activity. Also plays a role in the regulation of spermatogenesis; inhibits apoptotic activity in spermatogonia. In Rattus norvegicus (Rat), this protein is Rhomboid-related protein 4 (Rhbdd1).